Consider the following 185-residue polypeptide: Peptidyl-tRNA hydrolase (185 aa).

Tyr14 contributes to the tRNA binding site. His19 serves as the catalytic Proton acceptor. TRNA contacts are provided by Tyr64, Asn66, and Asn112.

Belongs to the PTH family. Monomer.

It localises to the cytoplasm. The catalysed reaction is an N-acyl-L-alpha-aminoacyl-tRNA + H2O = an N-acyl-L-amino acid + a tRNA + H(+). In terms of biological role, hydrolyzes ribosome-free peptidyl-tRNAs (with 1 or more amino acids incorporated), which drop off the ribosome during protein synthesis, or as a result of ribosome stalling. Catalyzes the release of premature peptidyl moieties from peptidyl-tRNA molecules trapped in stalled 50S ribosomal subunits, and thus maintains levels of free tRNAs and 50S ribosomes. This Lactobacillus delbrueckii subsp. bulgaricus (strain ATCC 11842 / DSM 20081 / BCRC 10696 / JCM 1002 / NBRC 13953 / NCIMB 11778 / NCTC 12712 / WDCM 00102 / Lb 14) protein is Peptidyl-tRNA hydrolase.